The chain runs to 179 residues: ATP synthase subunit b, chloroplastic (179 aa).

Residues 28-46 (LLNILALVAILVYTGKDFL) form a helical membrane-spanning segment.

The protein belongs to the ATPase B chain family. F-type ATPases have 2 components, F(1) - the catalytic core - and F(0) - the membrane proton channel. F(1) has five subunits: alpha(3), beta(3), gamma(1), delta(1), epsilon(1). F(0) has four main subunits: a(1), b(1), b'(1) and c(10-14). The alpha and beta chains form an alternating ring which encloses part of the gamma chain. F(1) is attached to F(0) by a central stalk formed by the gamma and epsilon chains, while a peripheral stalk is formed by the delta, b and b' chains.

The protein resides in the plastid. Its subcellular location is the chloroplast thylakoid membrane. Its function is as follows. F(1)F(0) ATP synthase produces ATP from ADP in the presence of a proton or sodium gradient. F-type ATPases consist of two structural domains, F(1) containing the extramembraneous catalytic core and F(0) containing the membrane proton channel, linked together by a central stalk and a peripheral stalk. During catalysis, ATP synthesis in the catalytic domain of F(1) is coupled via a rotary mechanism of the central stalk subunits to proton translocation. In terms of biological role, component of the F(0) channel, it forms part of the peripheral stalk, linking F(1) to F(0). The polypeptide is ATP synthase subunit b, chloroplastic (Thalassiosira pseudonana (Marine diatom)).